The chain runs to 660 residues: Pentatricopeptide repeat-containing protein At1g03560, mitochondrial (660 aa).

The N-terminal 12 residues, 1–12, are a transit peptide targeting the mitochondrion; sequence MRRFYRKPFSVP. 14 PPR repeats span residues 151–185, 186–220, 221–255, 256–290, 291–325, 326–360, 361–395, 396–430, 431–465, 466–496, 502–536, 537–571, 574–605, and 606–640; these read NLECYVSLVDVLALAKDVDRIRFVSSEIKKFEFPM, TVSAANALIKSFGKLGMVEELLWVWRKMKENGIEP, TLYTYNFLMNGLVSAMFVDSAERVFEVMESGRIKP, DIVTYNTMIKGYCKAGQTQKAMEKLRDMETRGHEA, DKITYMTMIQACYADSDFGSCVALYQEMDEKGIQV, PPHAFSLVIGGLCKEGKLNEGYTVFENMIRKGSKP, NVAIYTVLIDGYAKSGSVEDAIRLLHRMIDEGFKP, DVVTYSVVVNGLCKNGRVEEALDYFHTCRFDGLAI, NSMFYSSLIDGLGKAGRVDEAERLFEEMSEKGCTR, DSYCYNALIDAFTKHRKVDEAIALFKRMEEE, TVYTYTILLSGMFKEHRNEEALKLWDMMIDKGITP, TAACFRALSTGLCLSGKVARACKILDELAPMGVIL, ACEDMINTLCKAGRIKEACKLADGITERGREV, and PGRIRTVMINALRKVGKADLAMKLMHSKIGIGYER.

The protein belongs to the PPR family. P subfamily.

Its subcellular location is the mitochondrion. The protein is Pentatricopeptide repeat-containing protein At1g03560, mitochondrial of Arabidopsis thaliana (Mouse-ear cress).